Here is a 182-residue protein sequence, read N- to C-terminus: Large ribosomal subunit protein uL16 (182 aa).

The protein belongs to the universal ribosomal protein uL16 family.

The polypeptide is Large ribosomal subunit protein uL16 (Pyrobaculum arsenaticum (strain DSM 13514 / JCM 11321 / PZ6)).